A 343-amino-acid chain; its full sequence is Flavonoid 4'-O-methyltransferase 4 (343 aa).

D211 provides a ligand contact to S-adenosyl-L-methionine. H249 serves as the catalytic Proton acceptor.

This sequence belongs to the class I-like SAM-binding methyltransferase superfamily. Cation-independent O-methyltransferase family. Homodimer.

The enzyme catalyses apigenin + S-adenosyl-L-methionine = acacetin + S-adenosyl-L-homocysteine + H(+). It carries out the reaction kaempferol + S-adenosyl-L-methionine = kaempferide + S-adenosyl-L-homocysteine + H(+). It catalyses the reaction isorhamnetin + S-adenosyl-L-methionine = 3',4'-O-dimethylquercetin + S-adenosyl-L-homocysteine + 2 H(+). The catalysed reaction is scutellarein + S-adenosyl-L-methionine = scutellarein 4'-methyl ether + S-adenosyl-L-homocysteine + H(+). The enzyme catalyses (2S)-naringenin + S-adenosyl-L-methionine = (2S)-naringenin 4'-methyl ether + S-adenosyl-L-homocysteine + H(+). It carries out the reaction 4',7,8-trihydroxyflavone + S-adenosyl-L-methionine = 7,8-dihydroxy-4'-methoxyflavone + S-adenosyl-L-homocysteine + H(+). It catalyses the reaction taxifolin + S-adenosyl-L-methionine = taxifolin 4'-methyl ether + S-adenosyl-L-homocysteine + H(+). It functions in the pathway flavonoid metabolism. Functionally, flavonoid 4'-O-methyltransferase involved in the biosynthesis of polymethoxylated flavonoids natural products such as pebrellin, aroma compounds which contribute to the flavor of peppermint, and exhibit pharmacological activities such as anti-allergic, anti-oxidant, antibacterial, anti-proliferative, and anti-inflammatory effects. Catalyzes S-adenosylmethionine-dependent regioselective 4'-O-methylation of flavonoids; active on various hydroxylated flavonoid substrates, including isorhamnetin, kaempferol, apigenin (API), scutellarein (6-hydroxy-apigenin, 6-OH-API, SCU), taxifolin, 7,8,4'-trihydroxy-flavone and naringenin (NAR), and, with a lower efficiency, quercetin, rhamnetin, luteolin (LUT) and 7,8,3',4'-tetrahydroxy-flavone. In Mentha piperita (Peppermint), this protein is Flavonoid 4'-O-methyltransferase 4.